The following is a 276-amino-acid chain: Type II pantothenate kinase (276 aa).

Position 8–15 (Asp-8–Lys-15) interacts with ATP. The active-site Proton acceptor is Glu-76. Residues Thr-105, Gly-127–Met-131, Phe-143, and Ser-230 each bind ATP.

The protein belongs to the type II pantothenate kinase family. In terms of assembly, homodimer.

The protein localises to the cytoplasm. The catalysed reaction is (R)-pantothenate + ATP = (R)-4'-phosphopantothenate + ADP + H(+). It participates in cofactor biosynthesis; coenzyme A biosynthesis; CoA from (R)-pantothenate: step 1/5. In terms of biological role, catalyzes the phosphorylation of pantothenate (Pan), the first step in CoA biosynthesis. The polypeptide is Type II pantothenate kinase (Bacillus cereus (strain AH820)).